We begin with the raw amino-acid sequence, 120 residues long: Large ribosomal subunit protein uL18 (120 aa).

The protein belongs to the universal ribosomal protein uL18 family. As to quaternary structure, part of the 50S ribosomal subunit; part of the 5S rRNA/L5/L18/L25 subcomplex. Contacts the 5S and 23S rRNAs.

Functionally, this is one of the proteins that bind and probably mediate the attachment of the 5S RNA into the large ribosomal subunit, where it forms part of the central protuberance. The protein is Large ribosomal subunit protein uL18 of Bartonella quintana (strain Toulouse) (Rochalimaea quintana).